A 156-amino-acid polypeptide reads, in one-letter code: Small ribosomal subunit protein uS7 (156 aa).

It belongs to the universal ribosomal protein uS7 family. In terms of assembly, part of the 30S ribosomal subunit. Contacts proteins S9 and S11.

In terms of biological role, one of the primary rRNA binding proteins, it binds directly to 16S rRNA where it nucleates assembly of the head domain of the 30S subunit. Is located at the subunit interface close to the decoding center, probably blocks exit of the E-site tRNA. In Desulforudis audaxviator (strain MP104C), this protein is Small ribosomal subunit protein uS7.